We begin with the raw amino-acid sequence, 57 residues long: COP9 signalosome complex subunit 9 (57 aa).

T26 carries the post-translational modification Phosphothreonine.

The protein belongs to the CSN9 family. As to quaternary structure, component of the CSN complex, composed of COPS1/GPS1, COPS2, COPS3, COPS4, COPS5, COPS6, COPS7 (COPS7A or COPS7B), COPS8 and COPS9. In the complex, it interacts directly with COPS3, COPS5 and COPS6.

It is found in the nucleus. It localises to the cytoplasm. Its subcellular location is the nucleoplasm. Its function is as follows. Component of the COP9 signalosome complex (CSN), a complex involved in various cellular and developmental processes. The CSN complex is an essential regulator of the ubiquitin (Ubl) conjugation pathway by mediating the deneddylation of the cullin subunits of SCF-type E3 ligase complexes, leading to decrease the Ubl ligase activity of SCF-type complexes such as SCF, CSA or DDB2. The complex is also involved in phosphorylation of p53/TP53, c-jun/JUN, IkappaBalpha/NFKBIA, ITPK1 and IRF8/ICSBP, possibly via its association with CK2 and PKD kinases. CSN-dependent phosphorylation of TP53 and JUN promotes and protects degradation by the Ubl system, respectively. Plays a role in cell proliferation. The protein is COP9 signalosome complex subunit 9 of Bos taurus (Bovine).